A 612-amino-acid polypeptide reads, in one-letter code: Elongation factor 4 (612 aa).

The tr-type G domain maps to Lys-11 to Ser-193. Residues Asp-23 to Thr-28 and Asn-140 to Asp-143 contribute to the GTP site.

This sequence belongs to the TRAFAC class translation factor GTPase superfamily. Classic translation factor GTPase family. LepA subfamily.

It localises to the cell membrane. It carries out the reaction GTP + H2O = GDP + phosphate + H(+). Its function is as follows. Required for accurate and efficient protein synthesis under certain stress conditions. May act as a fidelity factor of the translation reaction, by catalyzing a one-codon backward translocation of tRNAs on improperly translocated ribosomes. Back-translocation proceeds from a post-translocation (POST) complex to a pre-translocation (PRE) complex, thus giving elongation factor G a second chance to translocate the tRNAs correctly. Binds to ribosomes in a GTP-dependent manner. The sequence is that of Elongation factor 4 from Lacticaseibacillus paracasei (strain ATCC 334 / BCRC 17002 / CCUG 31169 / CIP 107868 / KCTC 3260 / NRRL B-441) (Lactobacillus paracasei).